The chain runs to 219 residues: Translation initiation factor IF-3 (219 aa).

It belongs to the IF-3 family. Monomer.

It localises to the cytoplasm. Its function is as follows. IF-3 binds to the 30S ribosomal subunit and shifts the equilibrium between 70S ribosomes and their 50S and 30S subunits in favor of the free subunits, thus enhancing the availability of 30S subunits on which protein synthesis initiation begins. This chain is Translation initiation factor IF-3, found in Prochlorococcus marinus (strain MIT 9303).